Consider the following 139-residue polypeptide: Ribonuclease P protein component (139 aa).

The tract at residues 120-139 (KPTTGVEYSPKNEKCESVLP) is disordered. Over residues 129–139 (PKNEKCESVLP) the composition is skewed to basic and acidic residues.

Belongs to the RnpA family. Consists of a catalytic RNA component (M1 or rnpB) and a protein subunit.

The enzyme catalyses Endonucleolytic cleavage of RNA, removing 5'-extranucleotides from tRNA precursor.. Its function is as follows. RNaseP catalyzes the removal of the 5'-leader sequence from pre-tRNA to produce the mature 5'-terminus. It can also cleave other RNA substrates such as 4.5S RNA. The protein component plays an auxiliary but essential role in vivo by binding to the 5'-leader sequence and broadening the substrate specificity of the ribozyme. This is Ribonuclease P protein component from Chlamydia caviae (strain ATCC VR-813 / DSM 19441 / 03DC25 / GPIC) (Chlamydophila caviae).